The primary structure comprises 211 residues: Probable GTP-binding protein EngB (211 aa).

One can recognise an EngB-type G domain in the interval 26 to 200 (SGIEIAFAGR…RQKLDDWFAA (175 aa)). Residues 34–41 (GRSNAGKS), 61–65 (GRTRL), 79–82 (DLPG), 146–149 (TKAD), and 179–181 (FSS) contribute to the GTP site. Residues Ser41 and Thr63 each contribute to the Mg(2+) site.

It belongs to the TRAFAC class TrmE-Era-EngA-EngB-Septin-like GTPase superfamily. EngB GTPase family. Requires Mg(2+) as cofactor.

Its function is as follows. Necessary for normal cell division and for the maintenance of normal septation. The protein is Probable GTP-binding protein EngB of Sodalis glossinidius (strain morsitans).